The sequence spans 452 residues: Maltoporin (452 aa).

The signal sequence occupies residues 1 to 25 (MMITLRKLPLAVAVAAGVMSAQAMA).

Belongs to the porin LamB (TC 1.B.3) family. As to quaternary structure, homotrimer formed of three 18-stranded antiparallel beta-barrels, containing three independent channels.

The protein localises to the cell outer membrane. The catalysed reaction is beta-maltose(in) = beta-maltose(out). Functionally, involved in the transport of maltose and maltodextrins. This Salmonella choleraesuis (strain SC-B67) protein is Maltoporin.